A 289-amino-acid chain; its full sequence is Mitochondrial fission regulator 1-like (289 aa).

Thr-27 is modified (phosphothreonine). 8 positions are modified to phosphoserine: Ser-38, Ser-100, Ser-107, Ser-221, Ser-222, Ser-235, Ser-258, and Ser-270.

This sequence belongs to the MTFR1 family. Post-translationally, phosphorylated by AMPK. Upon stress, phosphorylation by AMPK is sufficient to induce mitochondrial fragmentation.

Its subcellular location is the mitochondrion outer membrane. In terms of biological role, mitochondrial protein required for adaptation of miochondrial dynamics to metabolic changes. Regulates mitochondrial morphology at steady state and mediates AMPK-dependent stress-induced mitochondrial fragmentation via the control of OPA1 levels. The protein is Mitochondrial fission regulator 1-like (Mtfr1l) of Rattus norvegicus (Rat).